Consider the following 1085-residue polypeptide: RecBCD enzyme subunit RecC (1085 aa).

This sequence belongs to the RecC family. As to quaternary structure, heterotrimer of RecB, RecC and RecD. All subunits contribute to DNA-binding.

Its function is as follows. A helicase/nuclease that prepares dsDNA breaks (DSB) for recombinational DNA repair. Binds to DSBs and unwinds DNA via a highly rapid and processive ATP-dependent bidirectional helicase activity. Holoenzyme degrades any linearized DNA that is unable to undergo homologous recombination. In the holoenzyme this subunit recognizes the wild-type Chi sequence, and when added to isolated RecB increases its ATP-dependent helicase processivity. Unlike the case in E.coli, suppresses RecA-dependent homologous recombination, is instead required for single-strand annealing pathway repair of DSB. In Mycolicibacterium smegmatis (strain ATCC 700084 / mc(2)155) (Mycobacterium smegmatis), this protein is RecBCD enzyme subunit RecC.